Here is a 341-residue protein sequence, read N- to C-terminus: DNA-directed RNA polymerase subunit alpha (341 aa).

Residues 1–237 (MLSLSKNWNA…EQLQLFISFE (237 aa)) are alpha N-terminal domain (alpha-NTD). An alpha C-terminal domain (alpha-CTD) region spans residues 252 to 341 (FSPYLLKRVD…LSKRYEDSYN (90 aa)).

This sequence belongs to the RNA polymerase alpha chain family. In terms of assembly, homodimer. The RNAP catalytic core consists of 2 alpha, 1 beta, 1 beta' and 1 omega subunit. When a sigma factor is associated with the core the holoenzyme is formed, which can initiate transcription.

The catalysed reaction is RNA(n) + a ribonucleoside 5'-triphosphate = RNA(n+1) + diphosphate. Its function is as follows. DNA-dependent RNA polymerase catalyzes the transcription of DNA into RNA using the four ribonucleoside triphosphates as substrates. The polypeptide is DNA-directed RNA polymerase subunit alpha (Rickettsia bellii (strain OSU 85-389)).